Here is a 249-residue protein sequence, read N- to C-terminus: MTIKAILTDIEGTTSAVSFVFDVLFPYAARHLPDFVREHAGETEVAAQLAAVRAESGEADADVERVIAILLQWIAEDRKATPLKALQGMVWAQGYRDGQLKGHVYPDAVQALREWKARGLDLYVYSSGSIQAQKLIFGCSEAGDLGSLFSGYFDTTSGPKRESASYARIAGAIGLPAAEILFLSDVVQELDAARDAGMRTLGLAREGGSLDGHPTVASSPTSSWSERAGYPEGTLLLGSIAPWVPPSAG.

Belongs to the HAD-like hydrolase superfamily. MasA/MtnC family. As to quaternary structure, monomer. Requires Mg(2+) as cofactor.

It catalyses the reaction 5-methylsulfanyl-2,3-dioxopentyl phosphate + H2O = 1,2-dihydroxy-5-(methylsulfanyl)pent-1-en-3-one + phosphate. The protein operates within amino-acid biosynthesis; L-methionine biosynthesis via salvage pathway; L-methionine from S-methyl-5-thio-alpha-D-ribose 1-phosphate: step 3/6. It participates in amino-acid biosynthesis; L-methionine biosynthesis via salvage pathway; L-methionine from S-methyl-5-thio-alpha-D-ribose 1-phosphate: step 4/6. Functionally, bifunctional enzyme that catalyzes the enolization of 2,3-diketo-5-methylthiopentyl-1-phosphate (DK-MTP-1-P) into the intermediate 2-hydroxy-3-keto-5-methylthiopentenyl-1-phosphate (HK-MTPenyl-1-P), which is then dephosphorylated to form the acireductone 1,2-dihydroxy-3-keto-5-methylthiopentene (DHK-MTPene). This chain is Enolase-phosphatase E1, found in Pseudomonas aeruginosa (strain ATCC 15692 / DSM 22644 / CIP 104116 / JCM 14847 / LMG 12228 / 1C / PRS 101 / PAO1).